The primary structure comprises 281 residues: Large ribosomal subunit protein uL2 (281 aa).

Residues 215-281 (LGRRPHTRGV…RRNNRKDSKK (67 aa)) are disordered. Residues 258–269 (KTRDNKSTDKFI) are compositionally biased toward basic and acidic residues. Residues 270-281 (VRRRNNRKDSKK) are compositionally biased toward basic residues.

The protein belongs to the universal ribosomal protein uL2 family. In terms of assembly, part of the 50S ribosomal subunit. Forms a bridge to the 30S subunit in the 70S ribosome.

One of the primary rRNA binding proteins. Required for association of the 30S and 50S subunits to form the 70S ribosome, for tRNA binding and peptide bond formation. It has been suggested to have peptidyltransferase activity; this is somewhat controversial. Makes several contacts with the 16S rRNA in the 70S ribosome. The protein is Large ribosomal subunit protein uL2 of Pelagibacter ubique (strain HTCC1062).